The following is a 212-amino-acid chain: Pyridoxine/pyridoxamine 5'-phosphate oxidase (212 aa).

FMN-binding positions include 61–66, 76–77, lysine 83, and glutamine 105; these read RSVLLK and YT. Position 66 (lysine 66) interacts with substrate. Positions 123, 127, and 131 each coordinate substrate. FMN is bound by residues 140 to 141 and tryptophan 185; that span reads QS. Position 191 to 193 (191 to 193) interacts with substrate; it reads RLH. FMN is bound at residue arginine 195.

It belongs to the pyridoxamine 5'-phosphate oxidase family. As to quaternary structure, homodimer. It depends on FMN as a cofactor.

The enzyme catalyses pyridoxamine 5'-phosphate + O2 + H2O = pyridoxal 5'-phosphate + H2O2 + NH4(+). It catalyses the reaction pyridoxine 5'-phosphate + O2 = pyridoxal 5'-phosphate + H2O2. It participates in cofactor metabolism; pyridoxal 5'-phosphate salvage; pyridoxal 5'-phosphate from pyridoxamine 5'-phosphate: step 1/1. It functions in the pathway cofactor metabolism; pyridoxal 5'-phosphate salvage; pyridoxal 5'-phosphate from pyridoxine 5'-phosphate: step 1/1. In terms of biological role, catalyzes the oxidation of either pyridoxine 5'-phosphate (PNP) or pyridoxamine 5'-phosphate (PMP) into pyridoxal 5'-phosphate (PLP). This chain is Pyridoxine/pyridoxamine 5'-phosphate oxidase, found in Dichelobacter nodosus (strain VCS1703A).